Reading from the N-terminus, the 279-residue chain is Probable thymidylate synthase (279 aa).

DUMP is bound by residues R21 and R136 to R137. C156 acts as the Nucleophile in catalysis. DUMP contacts are provided by residues R177–D180, N188, and H218–Y220. D180 provides a ligand contact to (6R)-5,10-methylene-5,6,7,8-tetrahydrofolate.

It belongs to the thymidylate synthase family.

The enzyme catalyses dUMP + (6R)-5,10-methylene-5,6,7,8-tetrahydrofolate = 7,8-dihydrofolate + dTMP. In terms of biological role, sythesizes the thymine necessary for the viral DNA replication. The sequence is that of Probable thymidylate synthase from Escherichia coli (Enterobacteria phage T5).